The primary structure comprises 324 residues: Proto-oncogene Mas (324 aa).

Residues 1-35 (MDQSNMTSLAEEKAMNTSSRNASLGSSHPPIPIVH) are Extracellular-facing. N-linked (GlcNAc...) asparagine glycosylation is found at Asn-5, Asn-16, and Asn-21. The helical transmembrane segment at 36-60 (WVIMSISPLGFVENGILLWFLCFRM) threads the bilayer. Residues 61–64 (RRNP) are Cytoplasmic-facing. The chain crosses the membrane as a helical span at residues 65-86 (FTVYITHLSIADISLLFCIFIL). At 87 to 103 (SIDYALDYELSSGHHYT) the chain is on the extracellular side. A helical membrane pass occupies residues 104 to 127 (IVTLSVTFLFGYNTGLYLLTAISV). At 128–148 (ERCLSVLYPIWYRCHRPKHQS) the chain is on the cytoplasmic side. Residues 149–171 (AFVCALLWALSCLVTTMEYVMCI) form a helical membrane-spanning segment. Residues 172-184 (DSGEESHSRSDCR) are Extracellular-facing. A helical transmembrane segment spans residues 185–205 (AVIIFIAILSFLVFTPLMLVS). Topologically, residues 206-223 (STILVVKIRKNTWASHSS) are cytoplasmic. Residues 224–244 (KLYIVIMVTIIIFLIFAMPMR) form a helical membrane-spanning segment. Topologically, residues 245 to 262 (VLYLLYYEYWSAFGNLHN) are extracellular. Residues 263-283 (ISLLFSTINSSANPFIYFFVG) traverse the membrane as a helical segment. The Cytoplasmic portion of the chain corresponds to 284-324 (SSKKKRFRESLKVVLTRAFKDEMQPRRQEGNGNTVSIETVV).

The protein belongs to the G-protein coupled receptor 1 family. As to quaternary structure, interacts with AGTR1. Interacts with FLNA (via filamin repeat 21); increases PKA-mediated phosphorylation of FLNA.

The protein localises to the cell membrane. Acts specifically as a functional antagonist of AGTR1 (angiotensin-2 type 1 receptor), although it up-regulates AGTR1 receptor levels. Positive regulation of AGTR1 levels occurs through activation of the G-proteins GNA11 and GNAQ, and stimulation of the protein kinase C signaling cascade. The antagonist effect on AGTR1 function is probably due to AGTR1 being physically altered by MAS1. Receptor for angiotensin 1-7. In Mus musculus (Mouse), this protein is Proto-oncogene Mas (Mas1).